Consider the following 220-residue polypeptide: Uracil-DNA glycosylase (220 aa).

The active-site Proton acceptor is D65.

The protein belongs to the uracil-DNA glycosylase (UDG) superfamily. UNG family.

It is found in the cytoplasm. The enzyme catalyses Hydrolyzes single-stranded DNA or mismatched double-stranded DNA and polynucleotides, releasing free uracil.. Its function is as follows. Excises uracil residues from the DNA which can arise as a result of misincorporation of dUMP residues by DNA polymerase or due to deamination of cytosine. The chain is Uracil-DNA glycosylase from Leuconostoc mesenteroides subsp. mesenteroides (strain ATCC 8293 / DSM 20343 / BCRC 11652 / CCM 1803 / JCM 6124 / NCDO 523 / NBRC 100496 / NCIMB 8023 / NCTC 12954 / NRRL B-1118 / 37Y).